A 223-amino-acid chain; its full sequence is 7-cyano-7-deazaguanine synthase (223 aa).

15–25 (FSGGQDSTTCL) serves as a coordination point for ATP. Cys-191, Cys-200, Cys-203, and Cys-206 together coordinate Zn(2+).

This sequence belongs to the QueC family. As to quaternary structure, homodimer. Requires Zn(2+) as cofactor.

The enzyme catalyses 7-carboxy-7-deazaguanine + NH4(+) + ATP = 7-cyano-7-deazaguanine + ADP + phosphate + H2O + H(+). It participates in purine metabolism; 7-cyano-7-deazaguanine biosynthesis. In terms of biological role, catalyzes the ATP-dependent conversion of 7-carboxy-7-deazaguanine (CDG) to 7-cyano-7-deazaguanine (preQ(0)). The chain is 7-cyano-7-deazaguanine synthase from Staphylococcus saprophyticus subsp. saprophyticus (strain ATCC 15305 / DSM 20229 / NCIMB 8711 / NCTC 7292 / S-41).